The chain runs to 576 residues: Probable proline--tRNA ligase, mitochondrial (576 aa).

This sequence belongs to the class-II aminoacyl-tRNA synthetase family.

The protein resides in the mitochondrion. It carries out the reaction tRNA(Pro) + L-proline + ATP = L-prolyl-tRNA(Pro) + AMP + diphosphate. The chain is Probable proline--tRNA ligase, mitochondrial (AIM10) from Saccharomyces cerevisiae (strain ATCC 204508 / S288c) (Baker's yeast).